The primary structure comprises 547 residues: Apolipoprotein N-acyltransferase (547 aa).

6 helical membrane passes run 31–51 (PLPA…AAHA), 65–85 (GWLF…VSMH), 89–109 (GLAA…LALF), 144–164 (AACW…FPWL), 181–201 (LLGV…LAGL), and 215–235 (LAAG…QFSW). The CN hydrolase domain maps to 248–511 (VQGNVEQSQK…AGVLPVAVQG (264 aa)). Catalysis depends on glutamate 292, which acts as the Proton acceptor. Residue lysine 366 is part of the active site. Cysteine 416 functions as the Nucleophile in the catalytic mechanism.

Belongs to the CN hydrolase family. Apolipoprotein N-acyltransferase subfamily.

The protein resides in the cell inner membrane. It catalyses the reaction N-terminal S-1,2-diacyl-sn-glyceryl-L-cysteinyl-[lipoprotein] + a glycerophospholipid = N-acyl-S-1,2-diacyl-sn-glyceryl-L-cysteinyl-[lipoprotein] + a 2-acyl-sn-glycero-3-phospholipid + H(+). The protein operates within protein modification; lipoprotein biosynthesis (N-acyl transfer). Catalyzes the phospholipid dependent N-acylation of the N-terminal cysteine of apolipoprotein, the last step in lipoprotein maturation. This chain is Apolipoprotein N-acyltransferase, found in Bordetella bronchiseptica (strain ATCC BAA-588 / NCTC 13252 / RB50) (Alcaligenes bronchisepticus).